The following is a 299-amino-acid chain: Putative arsenical pump-driving ATPase 2 (299 aa).

8 to 15 (GKGGVGKT) provides a ligand contact to ATP.

It belongs to the arsA ATPase family.

The enzyme catalyses arsenite(in) + ATP + H2O = arsenite(out) + ADP + phosphate + H(+). Anion-transporting ATPase. Catalyzes the extrusion of arsenite. In Aquifex aeolicus (strain VF5), this protein is Putative arsenical pump-driving ATPase 2 (arsA2).